Here is a 249-residue protein sequence, read N- to C-terminus: Probable septum site-determining protein MinC (249 aa).

The disordered stretch occupies residues Ala-117 to Ala-138.

This sequence belongs to the MinC family. As to quaternary structure, interacts with MinD and FtsZ.

Its function is as follows. Cell division inhibitor that blocks the formation of polar Z ring septums. Rapidly oscillates between the poles of the cell to destabilize FtsZ filaments that have formed before they mature into polar Z rings. Prevents FtsZ polymerization. This chain is Probable septum site-determining protein MinC, found in Xanthomonas campestris pv. campestris (strain 8004).